The chain runs to 1052 residues: Membrane-bound transcription factor site-1 protease (1052 aa).

The first 17 residues, 1-17, serve as a signal peptide directing secretion; that stretch reads MKLVNIWLLLLVVLLCG. The propeptide occupies 18-186; it reads KKHLGDRLGK…TGRHSSRRLL (169 aa). N-linked (GlcNAc...) asparagine glycosylation is present at Asn148. At Ser168 the chain carries Phosphoserine. Residues 187–999 are Lumenal-facing; sequence RAIPRQVAQT…MPGRYNQEVG (813 aa). The Peptidase S8 domain maps to 190 to 472; it reads PRQVAQTLQA…HGKLDLLRAY (283 aa). Asp218 acts as the Charge relay system in catalysis. The N-linked (GlcNAc...) asparagine glycan is linked to Asn236. Residue His249 is the Charge relay system of the active site. N-linked (GlcNAc...) asparagine glycosylation is present at Asn305. Catalysis depends on Ser414, which acts as the Charge relay system. N-linked (GlcNAc...) asparagine glycosylation is found at Asn515 and Asn728. The span at 877 to 887 shows a compositional bias: polar residues; the sequence is PSLSHSGNRQR. Residues 877–900 form a disordered region; it reads PSLSHSGNRQRPPSGAGLAPPERM. Asn939 carries N-linked (GlcNAc...) asparagine glycosylation. Residues 1000–1022 form a helical membrane-spanning segment; that stretch reads QTIPVFAFLGAMVALAFFVVQIS. The Cytoplasmic segment spans residues 1023–1052; it reads KAKSRPKRRRPRAKRPQLAQQAHPARTPSV. Residues 1026–1037 are compositionally biased toward basic residues; it reads SRPKRRRPRAKR. A disordered region spans residues 1026-1052; sequence SRPKRRRPRAKRPQLAQQAHPARTPSV.

This sequence belongs to the peptidase S8 family. As to quaternary structure, interacts with LYSET; this interaction bridges GNPTAB to MBTPS1. Ca(2+) is required as a cofactor. In terms of processing, the 148 kDa zymogen is processed progressively into two membrane-bound 120 and 106 kDa forms in the endoplasmic reticulum, and late into a secreted 98 kDa form. The propeptide is autocatalytically removed through an intramolecular cleavage after Leu-186. Further cleavage generates 14, 10, and 8 kDa intermediates. Widely expressed. In adult rat, highly expressed in anterior pituitary, thyroid and adrenal glands and in liver. In 2-day old rat, detected in developing skin, striated muscles, cardiac muscles, bones, teeth and internal organs. Highly expressed in retina, cerebellum, pituitary, submaxillary, thyroid and adrenal glands, molars, thymus, kidney and intestine.

The protein resides in the endoplasmic reticulum membrane. The protein localises to the golgi apparatus membrane. The catalysed reaction is Processes precursors containing basic and hydrophobic/aliphatic residues at P4 and P2, respectively, with a relatively relaxed acceptance of amino acids at P1 and P3.. Its activity is regulated as follows. Inhibited by divalent copper and zinc ions, but not by nickel or cobalt. Inhibited by its prosegment, but not smaller fragments. Inhibited by 4-(2-aminoethyl)benzenesulfonyl fluoride (AEBSF), a serine protease inhibitor. Serine protease that cleaves after hydrophobic or small residues, provided that Arg or Lys is in position P4: known substrates include SREBF1/SREBP1, SREBF2/SREBP2, BDNF, GNPTAB, ATF6, ATF6B and FAM20C. Cleaves substrates after Arg-Ser-Val-Leu (SREBP2), Arg-His-Leu-Leu (ATF6), Arg-Gly-Leu-Thr (BDNF) and its own propeptide after Arg-Arg-Leu-Leu. Catalyzes the first step in the proteolytic activation of the sterol regulatory element-binding proteins (SREBPs) SREBF1/SREBP1 and SREBF2/SREBP2. Also mediates the first step in the proteolytic activation of the cyclic AMP-dependent transcription factor ATF-6 (ATF6 and ATF6B). Mediates the protein cleavage of GNPTAB into subunit alpha and beta, thereby participating in biogenesis of lysosomes. Cleaves the propeptide from FAM20C which is required for FAM20C secretion from the Golgi apparatus membrane and for enhancement of FAM20C kinase activity, promoting osteoblast differentiation and biomineralization. Involved in the regulation of M6P-dependent Golgi-to-lysosome trafficking of lysosomal enzymes. It is required for the activation of CREB3L2/BBF2H7, a transcriptional activator of MIA3/TANGO and other genes controlling mega vesicle formation. Therefore, it plays a key role in the regulation of mega vesicle-mediated collagen trafficking. In astrocytes and osteoblasts, upon DNA damage and ER stress, mediates the first step of the regulated intramembrane proteolytic activation of the transcription factor CREB3L1, leading to the inhibition of cell-cycle progression. This chain is Membrane-bound transcription factor site-1 protease (Mbtps1), found in Rattus norvegicus (Rat).